A 248-amino-acid chain; its full sequence is Ribonuclease 3 (248 aa).

The 128-residue stretch at 15–142 (LKAFFKQYHV…MIAALYLDLG (128 aa)) folds into the RNase III domain. E55 provides a ligand contact to Mg(2+). D59 is a catalytic residue. Residues D128 and E131 each contribute to the Mg(2+) site. E131 is a catalytic residue. Positions 169-240 (DYKTELQEFL…ARDALQKLAT (72 aa)) constitute a DRBM domain.

Belongs to the ribonuclease III family. As to quaternary structure, homodimer. The cofactor is Mg(2+).

The protein resides in the cytoplasm. It catalyses the reaction Endonucleolytic cleavage to 5'-phosphomonoester.. Its function is as follows. Digests double-stranded RNA. Involved in the processing of primary rRNA transcript to yield the immediate precursors to the large and small rRNAs (23S and 16S). Processes some mRNAs, and tRNAs when they are encoded in the rRNA operon. Processes pre-crRNA and tracrRNA of type II CRISPR loci if present in the organism. The polypeptide is Ribonuclease 3 (Spiroplasma citri).